The sequence spans 149 residues: Probable ubiquitin-conjugating enzyme E2 12 (149 aa).

A compositionally biased stretch (basic and acidic residues) spans 1–15; the sequence is MASKRISRELRDMQR. Residues 1-22 form a disordered region; sequence MASKRISRELRDMQRHPPANCS. Residues 1–148 enclose the UBC core domain; that stretch reads MASKRISREL…AQKWTQKYAM (148 aa). The Glycyl thioester intermediate role is filled by Cys86.

The protein belongs to the ubiquitin-conjugating enzyme family. As to expression, ubiquitously expressed at very low levels.

It catalyses the reaction S-ubiquitinyl-[E1 ubiquitin-activating enzyme]-L-cysteine + [E2 ubiquitin-conjugating enzyme]-L-cysteine = [E1 ubiquitin-activating enzyme]-L-cysteine + S-ubiquitinyl-[E2 ubiquitin-conjugating enzyme]-L-cysteine.. Its pathway is protein modification; protein ubiquitination. In terms of biological role, accepts the ubiquitin from the E1 complex and catalyzes its covalent attachment to other proteins. The polypeptide is Probable ubiquitin-conjugating enzyme E2 12 (UBC12) (Arabidopsis thaliana (Mouse-ear cress)).